We begin with the raw amino-acid sequence, 105 residues long: Guanyl-specific ribonuclease Ms (105 aa).

2 disulfides stabilise this stretch: cysteine 3–cysteine 11 and cysteine 7–cysteine 102. Residue histidine 39 is part of the active site. The Proton acceptor role is filled by glutamate 57. Histidine 91 functions as the Proton donor in the catalytic mechanism.

The protein belongs to the ribonuclease N1/T1 family.

It catalyses the reaction [RNA] containing guanosine + H2O = an [RNA fragment]-3'-guanosine-3'-phosphate + a 5'-hydroxy-ribonucleotide-3'-[RNA fragment].. In Aspergillus phoenicis (Aspergillus saitoi), this protein is Guanyl-specific ribonuclease Ms.